A 491-amino-acid chain; its full sequence is Iota-carrageenase (491 aa).

Residues 1 to 19 (MKLQFKPVYLASIAIMAIG) form the signal peptide. A disulfide bond links Cys-422 and Cys-490.

Belongs to the glycosyl hydrolase 82 family.

The protein localises to the secreted. It carries out the reaction Endohydrolysis of 1,4-beta-D-linkages between D-galactose 4-sulfate and 3,6-anhydro-D-galactose-2-sulfate in iota-carrageenans.. Functionally, hydrolyzes iota-carrageenans, sulfated 1,3-alpha-1,4-beta galactans from red algal cell walls, with an inversion of anomeric configuration. Also active against hybrid iota-/nu-carrageenan, not active against kappa- or lambda-carrageenans. The chain is Iota-carrageenase from Zobellia galactanivorans (strain DSM 12802 / CCUG 47099 / CIP 106680 / NCIMB 13871 / Dsij).